Reading from the N-terminus, the 391-residue chain is Somatostatin receptor type 1 (391 aa).

Residues 1-11 are compositionally biased toward low complexity; the sequence is MFPNGTASSPS. The disordered stretch occupies residues 1–49; the sequence is MFPNGTASSPSSPSPSPGSCGEGGGSRGPGAGAADGMEEPGRNASQNGT. Residues 1–55 lie on the Extracellular side of the membrane; that stretch reads MFPNGTASSPSSPSPSPGSCGEGGGSRGPGAGAADGMEEPGRNASQNGTLSEGQG. Asn4 carries N-linked (GlcNAc...) asparagine glycosylation. A compositionally biased stretch (gly residues) spans 20–33; it reads CGEGGGSRGPGAGA. 2 N-linked (GlcNAc...) asparagine glycosylation sites follow: Asn43 and Asn47. The helical transmembrane segment at 56–83 threads the bilayer; the sequence is SAILISFIYSVVCLVGLCGNSMVIYVIL. Topologically, residues 84 to 93 are cytoplasmic; it reads RYAKMKTATN. A helical membrane pass occupies residues 94-119; it reads IYILNLAIADELLMLSVPFLVTSTLL. The Extracellular segment spans residues 120 to 130; sequence RHWPFGALLCR. Cysteines 129 and 207 form a disulfide. The chain crosses the membrane as a helical span at residues 131 to 152; sequence LVLSVDAVNMFTSIYCLTVLSV. The Cytoplasmic segment spans residues 153 to 174; it reads DRYVAVVHPIKAARYRRPTVAK. The chain crosses the membrane as a helical span at residues 175–195; the sequence is VVNLGVWVLSLLVILPIVVFS. The Extracellular portion of the chain corresponds to 196–218; sequence RTAANSDGTVACNMLMPEPAQRW. The helical transmembrane segment at 219–243 threads the bilayer; that stretch reads LVGFVLYTFLMGFLLPVGAICLCYV. Topologically, residues 244 to 269 are cytoplasmic; it reads LIIAKMRMVALKAGWQQRKRSERKIT. The helical transmembrane segment at 270-295 threads the bilayer; that stretch reads LMVMMVVMVFVICWMPFYVVQLVNVF. Residues 296–302 are Extracellular-facing; sequence AEQDDAT. The helical transmembrane segment at 303–326 threads the bilayer; the sequence is VSQLSVILGYANSCANPILYGFLS. Over 327 to 391 the chain is Cytoplasmic; it reads DNFKRSFQRI…GTCTSRITTL (65 aa). The S-palmitoyl cysteine moiety is linked to residue Cys338.

The protein belongs to the G-protein coupled receptor 1 family. Interacts with SKB1.

Its subcellular location is the cell membrane. Receptor for somatostatin with higher affinity for somatostatin-14 than -28. This receptor is coupled via pertussis toxin sensitive G proteins to inhibition of adenylyl cyclase. In addition it stimulates phosphotyrosine phosphatase and Na(+)/H(+) exchanger via pertussis toxin insensitive G proteins. This Canis lupus familiaris (Dog) protein is Somatostatin receptor type 1 (SSTR1).